A 394-amino-acid polypeptide reads, in one-letter code: Bifunctional enzyme IspD/IspF (394 aa).

Residues M1–V230 form a 2-C-methyl-D-erythritol 4-phosphate cytidylyltransferase region. The tract at residues L231–L394 is 2-C-methyl-D-erythritol 2,4-cyclodiphosphate synthase. Positions 237 and 239 each coordinate a divalent metal cation. 4-CDP-2-C-methyl-D-erythritol 2-phosphate is bound by residues D237 to H239 and H263 to S264. H271 is a binding site for a divalent metal cation. 4-CDP-2-C-methyl-D-erythritol 2-phosphate contacts are provided by residues D285 to G287, F290 to D294, T361 to E364, and F368.

This sequence in the N-terminal section; belongs to the IspD/TarI cytidylyltransferase family. IspD subfamily. It in the C-terminal section; belongs to the IspF family. The cofactor is a divalent metal cation.

The catalysed reaction is 2-C-methyl-D-erythritol 4-phosphate + CTP + H(+) = 4-CDP-2-C-methyl-D-erythritol + diphosphate. It carries out the reaction 4-CDP-2-C-methyl-D-erythritol 2-phosphate = 2-C-methyl-D-erythritol 2,4-cyclic diphosphate + CMP. It participates in isoprenoid biosynthesis; isopentenyl diphosphate biosynthesis via DXP pathway; isopentenyl diphosphate from 1-deoxy-D-xylulose 5-phosphate: step 2/6. Its pathway is isoprenoid biosynthesis; isopentenyl diphosphate biosynthesis via DXP pathway; isopentenyl diphosphate from 1-deoxy-D-xylulose 5-phosphate: step 4/6. In terms of biological role, bifunctional enzyme that catalyzes the formation of 4-diphosphocytidyl-2-C-methyl-D-erythritol from CTP and 2-C-methyl-D-erythritol 4-phosphate (MEP) (IspD), and catalyzes the conversion of 4-diphosphocytidyl-2-C-methyl-D-erythritol 2-phosphate (CDP-ME2P) to 2-C-methyl-D-erythritol 2,4-cyclodiphosphate (ME-CPP) with a corresponding release of cytidine 5-monophosphate (CMP) (IspF). The polypeptide is Bifunctional enzyme IspD/IspF (Desulforudis audaxviator (strain MP104C)).